We begin with the raw amino-acid sequence, 142 residues long: Ribosome-binding factor A (142 aa).

The segment covering 118–130 (DKAKQKQAGREDD) has biased composition (basic and acidic residues). Positions 118–142 (DKAKQKQAGREDDTPSVDEQEKDTD) are disordered. Positions 131 to 142 (TPSVDEQEKDTD) are enriched in acidic residues.

Belongs to the RbfA family. In terms of assembly, monomer. Binds 30S ribosomal subunits, but not 50S ribosomal subunits or 70S ribosomes.

The protein resides in the cytoplasm. In terms of biological role, one of several proteins that assist in the late maturation steps of the functional core of the 30S ribosomal subunit. Associates with free 30S ribosomal subunits (but not with 30S subunits that are part of 70S ribosomes or polysomes). Required for efficient processing of 16S rRNA. May interact with the 5'-terminal helix region of 16S rRNA. The protein is Ribosome-binding factor A of Shewanella denitrificans (strain OS217 / ATCC BAA-1090 / DSM 15013).